The primary structure comprises 249 residues: Putative adhesin RC1281 (249 aa).

Positions 1–22 are cleaved as a signal peptide; sequence MKKLLLIAAASTALLTSGLSFA.

In terms of biological role, adheres to biotinylated epithelial (Vero cell) proteins. The sequence is that of Putative adhesin RC1281 from Rickettsia conorii (strain ATCC VR-613 / Malish 7).